Consider the following 750-residue polypeptide: Photosystem I P700 chlorophyll a apoprotein A1 (750 aa).

8 helical membrane passes run 70–93 (IFSA…FHGA), 156–179 (LYCT…FHYH), 195–219 (LNHH…HVSL), 291–309 (TAHH…GHMY), 346–369 (WHAQ…HHMY), 385–411 (LSLF…IFMV), 433–455 (AIIS…LYIH), and 531–549 (FLVH…LILL). 2 residues coordinate [4Fe-4S] cluster: Cys-573 and Cys-582. The next 2 helical transmembrane spans lie at 589–610 (HVFL…HFSW) and 664–686 (LSAY…MFLF). Residue His-675 coordinates chlorophyll a'. Chlorophyll a-binding residues include Met-683 and Tyr-691. Trp-692 serves as a coordination point for phylloquinone. A helical membrane pass occupies residues 724-744 (AVGVTHYLLGGIATTWAFFLA).

This sequence belongs to the PsaA/PsaB family. The PsaA/B heterodimer binds the P700 chlorophyll special pair and subsequent electron acceptors. PSI consists of a core antenna complex that captures photons, and an electron transfer chain that converts photonic excitation into a charge separation. The eukaryotic PSI reaction center is composed of at least 11 subunits. Requires P700 is a chlorophyll a/chlorophyll a' dimer, A0 is one or more chlorophyll a, A1 is one or both phylloquinones and FX is a shared 4Fe-4S iron-sulfur center. as cofactor.

Its subcellular location is the plastid. It is found in the chloroplast thylakoid membrane. It catalyses the reaction reduced [plastocyanin] + hnu + oxidized [2Fe-2S]-[ferredoxin] = oxidized [plastocyanin] + reduced [2Fe-2S]-[ferredoxin]. In terms of biological role, psaA and PsaB bind P700, the primary electron donor of photosystem I (PSI), as well as the electron acceptors A0, A1 and FX. PSI is a plastocyanin-ferredoxin oxidoreductase, converting photonic excitation into a charge separation, which transfers an electron from the donor P700 chlorophyll pair to the spectroscopically characterized acceptors A0, A1, FX, FA and FB in turn. Oxidized P700 is reduced on the lumenal side of the thylakoid membrane by plastocyanin. In Spinacia oleracea (Spinach), this protein is Photosystem I P700 chlorophyll a apoprotein A1.